The following is a 447-amino-acid chain: GTPase Der (447 aa).

EngA-type G domains lie at 3-167 and 181-354; these read PVVA…NLPD and IKLA…KSAT. Residues 9–16, 56–60, 119–122, 187–194, 234–238, and 299–302 each bind GTP; these read GRPNVGKS, DTGGF, NKAE, DTAGL, and NKWD. Positions 355–439 constitute a KH-like domain; sequence RKMSTPVLTR…PLRIQFKSSQ (85 aa).

Belongs to the TRAFAC class TrmE-Era-EngA-EngB-Septin-like GTPase superfamily. EngA (Der) GTPase family. In terms of assembly, associates with the 50S ribosomal subunit.

Functionally, GTPase that plays an essential role in the late steps of ribosome biogenesis. The protein is GTPase Der of Variovorax paradoxus (strain S110).